The following is a 167-amino-acid chain: Crossover junction endodeoxyribonuclease RuvC (167 aa).

Active-site residues include Asp11, Glu71, and Asp143. Mg(2+) contacts are provided by Asp11, Glu71, and Asp143.

This sequence belongs to the RuvC family. In terms of assembly, homodimer which binds Holliday junction (HJ) DNA. The HJ becomes 2-fold symmetrical on binding to RuvC with unstacked arms; it has a different conformation from HJ DNA in complex with RuvA. In the full resolvosome a probable DNA-RuvA(4)-RuvB(12)-RuvC(2) complex forms which resolves the HJ. Mg(2+) serves as cofactor.

The protein resides in the cytoplasm. It carries out the reaction Endonucleolytic cleavage at a junction such as a reciprocal single-stranded crossover between two homologous DNA duplexes (Holliday junction).. In terms of biological role, the RuvA-RuvB-RuvC complex processes Holliday junction (HJ) DNA during genetic recombination and DNA repair. Endonuclease that resolves HJ intermediates. Cleaves cruciform DNA by making single-stranded nicks across the HJ at symmetrical positions within the homologous arms, yielding a 5'-phosphate and a 3'-hydroxyl group; requires a central core of homology in the junction. The consensus cleavage sequence is 5'-(A/T)TT(C/G)-3'. Cleavage occurs on the 3'-side of the TT dinucleotide at the point of strand exchange. HJ branch migration catalyzed by RuvA-RuvB allows RuvC to scan DNA until it finds its consensus sequence, where it cleaves and resolves the cruciform DNA. This chain is Crossover junction endodeoxyribonuclease RuvC, found in Hyphomonas neptunium (strain ATCC 15444).